The chain runs to 384 residues: uncharacterized protein (384 aa).

2 disordered regions span residues 133–257 (RQNS…TNQD) and 297–368 (ERTP…STAT). Residues 143–157 (PSTSSEPEPQPSTSS) show a composition bias toward low complexity. Residues 302-315 (DQTDITDDSADWSE) show a composition bias toward acidic residues. Basic and acidic residues predominate over residues 316-342 (GETRRPSHSEVGERRLSRENNSEDPNR). Positions 343 to 363 (SRSRSRSRERRRRRPRVRPGR) are enriched in basic residues.

This is an uncharacterized protein from Gallid herpesvirus 2 (strain Chicken/Md5/ATCC VR-987) (GaHV-2).